Reading from the N-terminus, the 469-residue chain is Aryl-phospho-beta-D-glucosidase BglH (469 aa).

Glu175 acts as the Proton donor in catalysis. Glu368 (nucleophile) is an active-site residue.

It belongs to the glycosyl hydrolase 1 family.

The catalysed reaction is 6-phospho-beta-D-glucosyl-(1-&gt;4)-D-glucose + H2O = D-glucose 6-phosphate + D-glucose. Functionally, catalyzes the hydrolysis of aryl-phospho-beta-D-glucosides such as 4-methylumbelliferyl-phospho-beta-D-glucopyranoside (MUG-P), phosphoarbutin and phosphosalicin. Plays a major role in the utilization of arbutin or salicin as the sole carbon source. BglA and BglH are the major proteins contributing to hydrolysis of MUG-P by extracts of late-exponential-phase or stationary-phase B.subtilis cells. The chain is Aryl-phospho-beta-D-glucosidase BglH (bglH) from Bacillus subtilis (strain 168).